We begin with the raw amino-acid sequence, 257 residues long: Type III pantothenate kinase (257 aa).

Asp-6 to Val-13 is an ATP binding site. Gly-107–Arg-110 is a substrate binding site. Catalysis depends on Asp-109, which acts as the Proton acceptor. Asp-129 lines the K(+) pocket. Thr-132 lines the ATP pocket. Thr-184 is a binding site for substrate.

It belongs to the type III pantothenate kinase family. Homodimer. It depends on NH4(+) as a cofactor. Requires K(+) as cofactor.

The protein localises to the cytoplasm. The catalysed reaction is (R)-pantothenate + ATP = (R)-4'-phosphopantothenate + ADP + H(+). It participates in cofactor biosynthesis; coenzyme A biosynthesis; CoA from (R)-pantothenate: step 1/5. Catalyzes the phosphorylation of pantothenate (Pan), the first step in CoA biosynthesis. The chain is Type III pantothenate kinase from Cereibacter sphaeroides (strain ATCC 17025 / ATH 2.4.3) (Rhodobacter sphaeroides).